The chain runs to 244 residues: RNA transcription, translation and transport factor protein (244 aa).

N6-acetyllysine is present on residues Lys-20, Lys-62, and Lys-98.

It belongs to the RTRAF family. As to quaternary structure, homodimer. Interacts with FAM98A (via N- and C-terminus). Interacts with NIN; which may prevent phosphorylation of NIN. Interacts with POLR2A. Component of a tRNA-splicing ligase complex with FAM98B, DDX1 and RTCB. (Microbial infection) Interacts with influenza A virus (IAV) RNA polymerase subunits PA, PB1 and PB2, and nucleocapsid NP. Associates with IAV polymerase complexes both in the nucleus and cytosol. Associates with IAV ribonucleoproteins (vRNP) packaged in virions. Interacts with hepatitis C virus core protein p19. Widely expressed. Expressed at high level in heart and skeletal muscle. Expressed at intermediate level in liver, pancreas, fetal brain and fetal lung. Weakly expressed in adult brain, adult lung, placenta, fetal liver and fetal kidney. Overexpressed in many brain tumors.

It localises to the nucleus. It is found in the cytoplasm. The protein resides in the cytosol. Its subcellular location is the perinuclear region. The protein localises to the cytoskeleton. It localises to the microtubule organizing center. It is found in the centrosome. RNA-binding protein involved in modulation of mRNA transcription by Polymerase II. Component of the tRNA-splicing ligase complex and is required for tRNA ligation. May be required for RNA transport. Its function is as follows. (Microbial infection) In case of infection by influenza virus A (IVA), is involved in viral replication. The sequence is that of RNA transcription, translation and transport factor protein from Homo sapiens (Human).